The sequence spans 182 residues: ATP synthase subunit b 1 (182 aa).

A helical membrane pass occupies residues 24–44; sequence FADPAFWVSIAFLMVVGFVYI.

The protein belongs to the ATPase B chain family. In terms of assembly, F-type ATPases have 2 components, F(1) - the catalytic core - and F(0) - the membrane proton channel. F(1) has five subunits: alpha(3), beta(3), gamma(1), delta(1), epsilon(1). F(0) has three main subunits: a(1), b(2) and c(10-14). The alpha and beta chains form an alternating ring which encloses part of the gamma chain. F(1) is attached to F(0) by a central stalk formed by the gamma and epsilon chains, while a peripheral stalk is formed by the delta and b chains.

The protein resides in the cell inner membrane. F(1)F(0) ATP synthase produces ATP from ADP in the presence of a proton or sodium gradient. F-type ATPases consist of two structural domains, F(1) containing the extramembraneous catalytic core and F(0) containing the membrane proton channel, linked together by a central stalk and a peripheral stalk. During catalysis, ATP synthesis in the catalytic domain of F(1) is coupled via a rotary mechanism of the central stalk subunits to proton translocation. Its function is as follows. Component of the F(0) channel, it forms part of the peripheral stalk, linking F(1) to F(0). This chain is ATP synthase subunit b 1, found in Rhodospirillum rubrum (strain ATCC 11170 / ATH 1.1.1 / DSM 467 / LMG 4362 / NCIMB 8255 / S1).